We begin with the raw amino-acid sequence, 241 residues long: DNA protection during starvation protein 2 (241 aa).

A disordered region spans residues 25–65 (GAQSAGNGVPSTNVNTPAPNTGQSTAQNTNTASPLPYNRAT). A compositionally biased stretch (polar residues) spans 33-57 (VPSTNVNTPAPNTGQSTAQNTNTAS). Residues His-100, Asp-127, and Glu-131 each coordinate Fe cation. A compositionally biased stretch (polar residues) spans 220–229 (TPTDPNTGFD). The tract at residues 220–241 (TPTDPNTGFDINNGKPVPLRGR) is disordered.

It belongs to the Dps family. Homododecamer. The 12 subunits form a hollow sphere into which the mineral iron core of up to 500 Fe(3+) can be deposited.

Its subcellular location is the cytoplasm. The enzyme catalyses 2 Fe(2+) + H2O2 + 2 H(+) = 2 Fe(3+) + 2 H2O. Functionally, protects DNA from oxidative damage by sequestering intracellular Fe(2+) ion and storing it in the form of Fe(3+) oxyhydroxide mineral. One hydrogen peroxide oxidizes two Fe(2+) ions, which prevents hydroxyl radical production by the Fenton reaction. The polypeptide is DNA protection during starvation protein 2 (dps2) (Deinococcus radiodurans (strain ATCC 13939 / DSM 20539 / JCM 16871 / CCUG 27074 / LMG 4051 / NBRC 15346 / NCIMB 9279 / VKM B-1422 / R1)).